A 1050-amino-acid polypeptide reads, in one-letter code: Integrin alpha-5 (1050 aa).

The N-terminal stretch at 1–32 is a signal peptide; sequence MQLPRGSRVPGLVATFLFPVLCALLTFSSVRG. Over 33–996 the chain is Extracellular; that stretch reads FNLAVEQPAV…IHWAKPESSY (964 aa). 7 FG-GAP repeats span residues 34 to 99, 116 to 175, 183 to 235, 249 to 301, 302 to 367, 368 to 426, and 430 to 493; these read NLAV…GTNC, DTPQ…NFTT, RTDF…QEAY, QTRQ…GTDL, RSLY…MEST, PHLI…GVDS, and QVLQ…ISPN. N75, N95, and N98 each carry an N-linked (GlcNAc...) asparagine glycan. Intrachain disulfides connect C90-C99 and C145-C166. N-linked (GlcNAc...) asparagine glycosylation occurs at N172. C182 and C195 are disulfide-bonded. Ca(2+)-binding residues include E270, S272, D274, T276, and D278. N287, N297, and N306 each carry an N-linked (GlcNAc...) asparagine glycan. Ca(2+)-binding residues include D324, N326, D328, L330, D332, D390, D392, D394, D398, D454, D456, N458, Y460, and D462. A disulfide bond links C502 and C513. N-linked (GlcNAc...) asparagine glycans are attached at residues N507, N515, N521, and N600. The cysteines at positions 519 and 575 are disulfide-linked. C636 and C642 are disulfide-bonded. N-linked (GlcNAc...) asparagine glycosylation is found at N649, N714, N763, and N861. C708 and C721 are oxidised to a cystine. 3 disulfide bridges follow: C839–C958, C862–C922, and C910–C917. Residues 997 to 1022 traverse the membrane as a helical segment; sequence GVPLWIIILAILIGLLLLALLIYVLY. The Cytoplasmic portion of the chain corresponds to 1023–1050; that stretch reads KLGFFKRSYQYGTAMEKAELKPQAASEA. The GFFKR motif signature appears at 1025–1029; that stretch reads GFFKR.

The protein belongs to the integrin alpha chain family. In terms of assembly, heterodimer of an alpha and a beta subunit. The alpha subunit is composed of a heavy and a light chain linked by a disulfide bond. Alpha-5 associates with beta-1.

The protein resides in the cell membrane. Its subcellular location is the cell junction. It localises to the focal adhesion. Functionally, integrin alpha-5/beta-1 (ITGA5:ITGB1) is a receptor for fibronectin. It recognizes the sequence R-G-D in its ligands. ITGA5:ITGB1 acts as a receptor for fibrillin-1 (FBN1) and mediates R-G-D-dependent cell adhesion to FBN1. ITGA5:ITGB1 acts as a receptor for fibronectin (FN1) and mediates R-G-D-dependent cell adhesion to FN1. ITGA5:ITGB1 is a receptor for IL1B and binding is essential for IL1B signaling. ITGA5:ITGB3 is a receptor for soluble CD40LG and is required for CD40/CD40LG signaling. The chain is Integrin alpha-5 (itga5) from Xenopus laevis (African clawed frog).